Here is an 85-residue protein sequence, read N- to C-terminus: Small ribosomal subunit protein uS17 (85 aa).

It belongs to the universal ribosomal protein uS17 family. Part of the 30S ribosomal subunit.

Functionally, one of the primary rRNA binding proteins, it binds specifically to the 5'-end of 16S ribosomal RNA. The chain is Small ribosomal subunit protein uS17 from Blochmanniella floridana.